The primary structure comprises 429 residues: Glutamate-1-semialdehyde 2,1-aminomutase (429 aa).

The residue at position 267 (Lys267) is an N6-(pyridoxal phosphate)lysine.

The protein belongs to the class-III pyridoxal-phosphate-dependent aminotransferase family. HemL subfamily. As to quaternary structure, homodimer. The cofactor is pyridoxal 5'-phosphate.

The protein localises to the cytoplasm. The catalysed reaction is (S)-4-amino-5-oxopentanoate = 5-aminolevulinate. The protein operates within porphyrin-containing compound metabolism; protoporphyrin-IX biosynthesis; 5-aminolevulinate from L-glutamyl-tRNA(Glu): step 2/2. This is Glutamate-1-semialdehyde 2,1-aminomutase from Anaeromyxobacter sp. (strain Fw109-5).